The chain runs to 475 residues: Ribulose bisphosphate carboxylase large chain (475 aa).

A propeptide spanning residues 1–2 (MS) is cleaved from the precursor. Pro3 carries the post-translational modification N-acetylproline. The residue at position 14 (Lys14) is an N6,N6,N6-trimethyllysine. Positions 123 and 173 each coordinate substrate. Lys175 acts as the Proton acceptor in catalysis. Lys177 is a substrate binding site. Mg(2+)-binding residues include Lys201, Asp203, and Glu204. At Lys201 the chain carries N6-carboxylysine. The active-site Proton acceptor is His294. 3 residues coordinate substrate: Arg295, His327, and Ser379.

Belongs to the RuBisCO large chain family. Type I subfamily. In terms of assembly, heterohexadecamer of 8 large chains and 8 small chains; disulfide-linked. The disulfide link is formed within the large subunit homodimers. It depends on Mg(2+) as a cofactor. Post-translationally, the disulfide bond which can form in the large chain dimeric partners within the hexadecamer appears to be associated with oxidative stress and protein turnover.

Its subcellular location is the plastid. The protein resides in the chloroplast. The enzyme catalyses 2 (2R)-3-phosphoglycerate + 2 H(+) = D-ribulose 1,5-bisphosphate + CO2 + H2O. It catalyses the reaction D-ribulose 1,5-bisphosphate + O2 = 2-phosphoglycolate + (2R)-3-phosphoglycerate + 2 H(+). Functionally, ruBisCO catalyzes two reactions: the carboxylation of D-ribulose 1,5-bisphosphate, the primary event in carbon dioxide fixation, as well as the oxidative fragmentation of the pentose substrate in the photorespiration process. Both reactions occur simultaneously and in competition at the same active site. The protein is Ribulose bisphosphate carboxylase large chain of Pinus longaeva (Great Basin bristlecone pine).